Here is a 107-residue protein sequence, read N- to C-terminus: MRDMMGMMKQAKELQAKMKAMQDEIATMEASASSGGGLVTVTLSGKGTLSALKIDPSLMKEDEVEILEDLIIAAHNDGKAKLEAAMAEKTQSLTAGLPIPPGFKLPF.

This sequence belongs to the YbaB/EbfC family. Homodimer.

It localises to the cytoplasm. Its subcellular location is the nucleoid. Functionally, binds to DNA and alters its conformation. May be involved in regulation of gene expression, nucleoid organization and DNA protection. This chain is Nucleoid-associated protein BMEA_A0033, found in Brucella melitensis biotype 2 (strain ATCC 23457).